Consider the following 190-residue polypeptide: UPF0340 protein BT9727_4999 (190 aa).

It belongs to the UPF0340 family.

This Bacillus thuringiensis subsp. konkukian (strain 97-27) protein is UPF0340 protein BT9727_4999.